The following is a 205-amino-acid chain: Recombination protein RecR (205 aa).

A C4-type zinc finger spans residues 64-79 (CSRCYFITQGDLCAIC). A Toprim domain is found at 87-182 (RVICVVEEPL…RVTRLARGLP (96 aa)).

The protein belongs to the RecR family.

Functionally, may play a role in DNA repair. It seems to be involved in an RecBC-independent recombinational process of DNA repair. It may act with RecF and RecO. This Roseiflexus sp. (strain RS-1) protein is Recombination protein RecR.